The sequence spans 136 residues: Large ribosomal subunit protein bL21 (136 aa).

It belongs to the bacterial ribosomal protein bL21 family. In terms of assembly, part of the 50S ribosomal subunit. Contacts protein L20.

This protein binds to 23S rRNA in the presence of protein L20. The polypeptide is Large ribosomal subunit protein bL21 (Trichodesmium erythraeum (strain IMS101)).